Consider the following 218-residue polypeptide: C-type lectin domain family 2 member H (218 aa).

Residues 1–52 (MNAAKVETSSMGMLQRADLTAADCLQEGEMGKKIQGKCFRIISTVSPVKLYC) lie on the Cytoplasmic side of the membrane. The helical; Signal-anchor for type II membrane protein transmembrane segment at 53–73 (CYGVIMVLTVAVIALSVALSV) threads the bilayer. Residues 74 to 218 (RNKIPAMEDR…SRVGSVPRHV (145 aa)) are Extracellular-facing. An intrachain disulfide couples Cys-90 to Cys-101. The C-type lectin domain occupies 97–201 (FGSKCFYFSE…SYTHRKWICS (105 aa)). The N-linked (GlcNAc...) asparagine glycan is linked to Asn-110. A disulfide bond links Cys-118 and Cys-200.

As to expression, detected in ileum, liver, kidney and in IL2-activated natural killer cells.

Its subcellular location is the cell membrane. Lectin-type cell surface receptor. This chain is C-type lectin domain family 2 member H (Clec2h), found in Mus musculus (Mouse).